The sequence spans 292 residues: Pyridoxal 5'-phosphate synthase subunit PdxS (292 aa).

Asp22 contributes to the D-ribose 5-phosphate binding site. Catalysis depends on Lys79, which acts as the Schiff-base intermediate with D-ribose 5-phosphate. Gly151 lines the D-ribose 5-phosphate pocket. Arg163 contacts D-glyceraldehyde 3-phosphate. D-ribose 5-phosphate is bound by residues Gly212 and Gly233–Ser234.

The protein belongs to the PdxS/SNZ family. In the presence of PdxT, forms a dodecamer of heterodimers.

The enzyme catalyses aldehydo-D-ribose 5-phosphate + D-glyceraldehyde 3-phosphate + L-glutamine = pyridoxal 5'-phosphate + L-glutamate + phosphate + 3 H2O + H(+). It functions in the pathway cofactor biosynthesis; pyridoxal 5'-phosphate biosynthesis. Catalyzes the formation of pyridoxal 5'-phosphate from ribose 5-phosphate (RBP), glyceraldehyde 3-phosphate (G3P) and ammonia. The ammonia is provided by the PdxT subunit. Can also use ribulose 5-phosphate and dihydroxyacetone phosphate as substrates, resulting from enzyme-catalyzed isomerization of RBP and G3P, respectively. This is Pyridoxal 5'-phosphate synthase subunit PdxS from Thermoanaerobacter pseudethanolicus (strain ATCC 33223 / 39E) (Clostridium thermohydrosulfuricum).